Here is a 139-residue protein sequence, read N- to C-terminus: MKKGVLLNSSISSVIARLGHTDKITIADAGLPIPSSVERIDLALTQGIPDFMSVLQTITHEMQVEAVMLAIEIKNINPLLFSEITRYLHLLEQQQKKPIEIIYVTHEEFKTQLPDNKAVIRTGECSPYANIVLFSGVTF.

His20 functions as the Proton donor in the catalytic mechanism. Substrate-binding positions include Asp28, His106, and 128–130 (YAN).

Belongs to the RbsD / FucU family. RbsD subfamily. As to quaternary structure, homodecamer.

Its subcellular location is the cytoplasm. It catalyses the reaction beta-D-ribopyranose = beta-D-ribofuranose. It participates in carbohydrate metabolism; D-ribose degradation; D-ribose 5-phosphate from beta-D-ribopyranose: step 1/2. Its function is as follows. Catalyzes the interconversion of beta-pyran and beta-furan forms of D-ribose. This is D-ribose pyranase from Proteus mirabilis (strain HI4320).